The primary structure comprises 283 residues: Syntaxin VAM3 (283 aa).

Positions 1-26 (MSFFDIEAQSSKGNSQQEPQFSTNQK) are disordered. Over 1 to 261 (MSFFDIEAQS…ADQHQRDRNK (261 aa)) the chain is Cytoplasmic. Over residues 8–25 (AQSSKGNSQQEPQFSTNQ) the composition is skewed to polar residues. Coiled-coil stretches lie at residues 28 to 48 (KELS…EKEC) and 84 to 111 (LIHQ…SYNQ). 2 disordered regions span residues 116–146 (FPLK…DPES) and 162–182 (NEGQ…QGLS). The span at 127 to 144 (SKERKDIHPRTEAVRQDP) shows a compositional bias: basic and acidic residues. Positions 169 to 189 (QLQEEQEQQQQGLSQEELDFQ) form a coiled coil. In terms of domain architecture, t-SNARE coiled-coil homology spans 190–252 (TIIHQERSQQ…QNANKQLTRA (63 aa)). Residues 262 to 282 (CGKVTLIIIIVVCMVVLLAVL) traverse the membrane as a helical; Anchor for type IV membrane protein segment. A topological domain (vacuolar) is located at residue Ser-283.

It belongs to the syntaxin family. Associates with VAM7.

Its subcellular location is the vacuole membrane. Functionally, required for vacuolar assembly. Provides the t-SNARE function in a late step of the vacuolar assembly. Required for homotypic vacuole membrane fusion, autophagy and fusion of biosynthetic transport vesicles with the vacuole. Required for the delivery of alpha-factor receptor-ligand complexes to the vacuole. This Saccharomyces cerevisiae (strain ATCC 204508 / S288c) (Baker's yeast) protein is Syntaxin VAM3 (VAM3).